The sequence spans 443 residues: MPETMTPSEIVSELDKHIIGQQKAKKAVAVALRNRWRRQQVADPLRQEITPKNILMIGPTGVGKTEIARRLAKLADAPFIKIEATKFTEVGYVGRDVDTIVRDLAEMAVKQTRESEMKKVRAKAEDAAEDRLLDVLIPPPRDIGFAQPEEKDSNARQVFRKKLREGQLDDKEIELEVAAGMPGMDIMGPPGMEEMTEQIRSMFAGLGQGKKHRRKMKVHEAFKLLVEEEAGKLVNEEELKHKAIANVEQNGIVFLDEIDKITSRSEHGGGEVSRQGVQRDLLPLVEGTTVSTKYGMIKTDHILFIASGAFQLSKPSDLIPELQGRFPIRVELDSLSVDDFQAILTQTDASLTKQYQALMKTEDVELVFADDGIRRLAEIAFSVNEKVENIGARRLYTVMERLLEDLSFHAHKSSGETVTIDAAYVDSRLNELAGSEDLSRYVL.

Residues isoleucine 19, 61 to 66 (GVGKTE), aspartate 256, glutamate 321, and arginine 393 each bind ATP.

Belongs to the ClpX chaperone family. HslU subfamily. In terms of assembly, a double ring-shaped homohexamer of HslV is capped on each side by a ring-shaped HslU homohexamer. The assembly of the HslU/HslV complex is dependent on binding of ATP.

The protein resides in the cytoplasm. In terms of biological role, ATPase subunit of a proteasome-like degradation complex; this subunit has chaperone activity. The binding of ATP and its subsequent hydrolysis by HslU are essential for unfolding of protein substrates subsequently hydrolyzed by HslV. HslU recognizes the N-terminal part of its protein substrates and unfolds these before they are guided to HslV for hydrolysis. This Ralstonia nicotianae (strain ATCC BAA-1114 / GMI1000) (Ralstonia solanacearum) protein is ATP-dependent protease ATPase subunit HslU.